A 168-amino-acid chain; its full sequence is G/U mismatch-specific DNA glycosylase (168 aa).

The protein belongs to the uracil-DNA glycosylase (UDG) superfamily. TDG/mug family. As to quaternary structure, binds DNA as a monomer.

The protein resides in the cytoplasm. The catalysed reaction is Specifically hydrolyzes mismatched double-stranded DNA and polynucleotides, releasing free uracil.. Functionally, excises ethenocytosine and uracil, which can arise by alkylation or deamination of cytosine, respectively, from the corresponding mispairs with guanine in ds-DNA. It is capable of hydrolyzing the carbon-nitrogen bond between the sugar-phosphate backbone of the DNA and the mispaired base. The complementary strand guanine functions in substrate recognition. Required for DNA damage lesion repair in stationary-phase cells. The sequence is that of G/U mismatch-specific DNA glycosylase from Escherichia coli O157:H7 (strain EC4115 / EHEC).